Consider the following 157-residue polypeptide: MRIGHGYDVHRLVEDRKLIMGGVDIPWEKGLLGHSDADVLLHAIADALLGALAMGDIGKHFPDTDPAFKGADSMKLLEHVVGLIRTQGYAVGNLDATIIAQRPKMAPHIQAMRENVARACGVEVDRINVKATTEEGLGFTGTGEGISAHAVVLLIPQ.

Positions 8 and 10 each coordinate a divalent metal cation. Residues 8–10 and 34–35 contribute to the 4-CDP-2-C-methyl-D-erythritol 2-phosphate site; these read DVH and HS. Residue H42 coordinates a divalent metal cation. Residues 56–58, 61–65, 100–106, 132–135, and F139 each bind 4-CDP-2-C-methyl-D-erythritol 2-phosphate; these read DIG, FPDTD, AQRPKMA, and TTEE.

The protein belongs to the IspF family. In terms of assembly, homotrimer. Requires a divalent metal cation as cofactor.

The enzyme catalyses 4-CDP-2-C-methyl-D-erythritol 2-phosphate = 2-C-methyl-D-erythritol 2,4-cyclic diphosphate + CMP. Its pathway is isoprenoid biosynthesis; isopentenyl diphosphate biosynthesis via DXP pathway; isopentenyl diphosphate from 1-deoxy-D-xylulose 5-phosphate: step 4/6. Functionally, involved in the biosynthesis of isopentenyl diphosphate (IPP) and dimethylallyl diphosphate (DMAPP), two major building blocks of isoprenoid compounds. Catalyzes the conversion of 4-diphosphocytidyl-2-C-methyl-D-erythritol 2-phosphate (CDP-ME2P) to 2-C-methyl-D-erythritol 2,4-cyclodiphosphate (ME-CPP) with a corresponding release of cytidine 5-monophosphate (CMP). The sequence is that of 2-C-methyl-D-erythritol 2,4-cyclodiphosphate synthase from Trichlorobacter lovleyi (strain ATCC BAA-1151 / DSM 17278 / SZ) (Geobacter lovleyi).